Reading from the N-terminus, the 162-residue chain is Large ribosomal subunit protein bL17 (162 aa).

Residues Ala125–Ala140 are compositionally biased toward basic and acidic residues. A disordered region spans residues Ala125 to Ala162.

The protein belongs to the bacterial ribosomal protein bL17 family. Part of the 50S ribosomal subunit. Contacts protein L32.

This chain is Large ribosomal subunit protein bL17, found in Oleidesulfovibrio alaskensis (strain ATCC BAA-1058 / DSM 17464 / G20) (Desulfovibrio alaskensis).